The chain runs to 68 residues: MATALSGLAVRLSRSAAARSYGVFCKGLTRTLLIFFDLAWRLRINFPYLYIVASMMLNVRLQVHIEIH.

In terms of tissue distribution, expressed specifically in salivary glands (at protein level).

The protein is Small integral membrane protein 10-like protein 3 of Mus musculus (Mouse).